The sequence spans 313 residues: Protein PHOSPHATE-INDUCED 1 (313 aa).

The N-terminal stretch at 1–22 (MATSHFILKLFLVISFCNVCFA) is a signal peptide. Asn119 is a glycosylation site (N-linked (GlcNAc...) asparagine).

The protein belongs to the EXORDIUM family.

The protein localises to the secreted. Its subcellular location is the extracellular space. It is found in the apoplast. Its function is as follows. May be involved in the regulation of cell division. This Nicotiana tabacum (Common tobacco) protein is Protein PHOSPHATE-INDUCED 1.